We begin with the raw amino-acid sequence, 772 residues long: Metabotropic glutamate receptor-like protein G (772 aa).

The N-terminal stretch at 1–23 (MKKIIFLVLFLIFIFKDIKSSYG) is a signal peptide. Residues 24–391 (VDLVNFKMIT…TQVKFSPSIQ (368 aa)) are Extracellular-facing. Residues N73, N126, N262, N313, N343, and N378 are each glycosylated (N-linked (GlcNAc...) asparagine). A helical membrane pass occupies residues 392–412 (IGVSIVSGVLIAIVLLSMVGV). Residues 413-426 (YKYRASSSIRSASP) lie on the Cytoplasmic side of the membrane. A helical transmembrane segment spans residues 427–447 (IFLIFILFGALIVFGGIILWV). The Extracellular portion of the chain corresponds to 448-463 (SELNDHVCNGRLWMVT). Residues 464–484 (LGFSTLIGSLVVKNFRIWLIF) form a helical membrane-spanning segment. The Cytoplasmic portion of the chain corresponds to 485-500 (DNPELKTVKITNYQLY). A helical membrane pass occupies residues 501–521 (PWVACCLVINIILMSILTSLG). The Extracellular portion of the chain corresponds to 522–551 (DLREVDATGIDSLGKYEFLKICKMNNSGAS). Residue N546 is glycosylated (N-linked (GlcNAc...) asparagine). A helical membrane pass occupies residues 552-572 (VLYTILAYFGALLLTGVFVSW). Residues 573 to 586 (KIRIVDIEEFNESR) are Cytoplasmic-facing. The helical transmembrane segment at 587–607 (AIAHTLYAISFCLFVIVPLMI) threads the bilayer. Topologically, residues 608–616 (SPLEKQSET) are extracellular. The helical transmembrane segment at 617–637 (IILSVAGLFITTAAVLIIFLP) threads the bilayer. Over 638-772 (KFYRVYEYGE…QIEPDEKNQD (135 aa)) the chain is Cytoplasmic. Residues 664–772 (TARAESHKSS…QIEPDEKNQD (109 aa)) form a disordered region. The span at 718–728 (FTEESVSEIDE) shows a compositional bias: acidic residues. Positions 740–753 (PEINQSEQQNSEIE) are enriched in low complexity. Residues 754–763 (QPPPPPPPQQ) are compositionally biased toward pro residues.

This sequence in the N-terminal section; belongs to the BMP lipoprotein family. The protein in the C-terminal section; belongs to the G-protein coupled receptor 3 family. GABA-B receptor subfamily.

It localises to the membrane. The polypeptide is Metabotropic glutamate receptor-like protein G (grlG) (Dictyostelium discoideum (Social amoeba)).